The chain runs to 212 residues: MAAPPQLRALLQAVNKLLRQRRYHAALAVIKGFRNGAVYGVKIRAPHALVMTFLFRSGSLQEKLQAILKATYTHSRNLACFVFTYKSLQALQSHVQGGTHQMHSFLAAFIGGLLLFGENNNINSQINMYLTSRVLFALCRLGVEKGYIPALKWDPFPLHTAVIWGLVLWLFEYHRPTLQPSLQSSMTYLYEDSNVWHDLSDFLIFNKSRPSK.

Helical transmembrane passes span 97–117 (GGTHQMHSFLAAFIGGLLLFG) and 151–171 (LKWDPFPLHTAVIWGLVLWLF). N-linked (GlcNAc...) asparagine glycosylation occurs at asparagine 206.

This sequence belongs to the peroxisomal membrane protein PXMP2/4 family. As to quaternary structure, interacts with PEX19. As to expression, liver.

It localises to the peroxisome membrane. This is Peroxisomal membrane protein 4 (Pxmp4) from Rattus norvegicus (Rat).